The chain runs to 139 residues: Putative pre-16S rRNA nuclease (139 aa).

It belongs to the YqgF nuclease family.

Its subcellular location is the cytoplasm. Its function is as follows. Could be a nuclease involved in processing of the 5'-end of pre-16S rRNA. The chain is Putative pre-16S rRNA nuclease from Photorhabdus laumondii subsp. laumondii (strain DSM 15139 / CIP 105565 / TT01) (Photorhabdus luminescens subsp. laumondii).